The following is a 111-amino-acid chain: Irditoxin subunit B (111 aa).

The N-terminal stretch at Met-1–Ala-19 is a signal peptide. The propeptide occupies Asp-20 to Gly-34. Pyrrolidone carboxylic acid is present on Gln-35. 5 disulfide bridges follow: Cys-44/Cys-68, Cys-47/Cys-55, Cys-61/Cys-87, Cys-91/Cys-102, and Cys-103/Cys-108.

Belongs to the three-finger toxin family. Ancestral subfamily. Boigatoxin sub-subfamily. As to quaternary structure, heterodimer of A and B chains; disulfide-linked. In terms of tissue distribution, expressed by the venom gland.

Its subcellular location is the secreted. Functionally, this bird and reptile-specific postsynaptic neurotoxin inhibits the chick muscle alpha-1-beta-1-gamma-delta (CHRNA1-CHRNB1-CHRNG-CHRND) nicotinic acetylcholine receptor (nAChR) 100-fold more compared with the mouse receptor. In vivo, produces rapid flaccid paralysis, dyspnea and increased respiratory rate in geckos. At sublethal doses geckos were immobilized for up to three days and then recovered. Chicks injected with lethal doses showed rapid onset of inactivity, dyspnea and neck droop, and no extended paralysis with survival was seen. This Boiga irregularis (Brown tree snake) protein is Irditoxin subunit B.